The sequence spans 523 residues: Glycerate kinase (523 aa).

Serine 60 carries the post-translational modification Phosphoserine.

This sequence belongs to the glycerate kinase type-2 family. In terms of tissue distribution, widely expressed.

Its subcellular location is the cytoplasm. It is found in the mitochondrion. It catalyses the reaction (R)-glycerate + ATP = (2R)-3-phosphoglycerate + ADP + H(+). This is Glycerate kinase (GLYCTK) from Homo sapiens (Human).